The following is a 303-amino-acid chain: Polyisoprenyl-teichoic acid--peptidoglycan teichoic acid transferase TagU (303 aa).

Over 1–4 the chain is Cytoplasmic; sequence MKKK. A helical; Signal-anchor for type II membrane protein membrane pass occupies residues 5 to 25; sequence ILFWVLGILGVLIIGGGIYAY. The Extracellular portion of the chain corresponds to 26 to 303; it reads NVYSSVSNTL…KLRSHLEVTK (278 aa).

The protein belongs to the LytR/CpsA/Psr (LCP) family.

The protein resides in the cell membrane. It functions in the pathway cell wall biogenesis. May catalyze the final step in cell wall teichoic acid biosynthesis, the transfer of the anionic cell wall polymers (APs) from their lipid-linked precursor to the cell wall peptidoglycan (PG). This Bacillus cereus (strain AH820) protein is Polyisoprenyl-teichoic acid--peptidoglycan teichoic acid transferase TagU.